A 126-amino-acid chain; its full sequence is Profilin (126 aa).

Belongs to the profilin family. As to quaternary structure, occurs in many kinds of cells as a complex with monomeric actin in a 1:1 ratio.

It is found in the cytoplasm. The protein localises to the cytoskeleton. In terms of biological role, binds to actin and affects the structure of the cytoskeleton. At high concentrations, profilin prevents the polymerization of actin, whereas it enhances it at low concentrations. By binding to PIP2, it inhibits the formation of IP3 and DG. The chain is Profilin (PFY1) from Saccharomyces cerevisiae (strain ATCC 204508 / S288c) (Baker's yeast).